Consider the following 1120-residue polypeptide: Isoleucine--tRNA ligase (1120 aa).

Residues 64–74 (PFANGLPHYGH) carry the 'HIGH' region motif. Residues 647-651 (KLSKR) carry the 'KMSKS' region motif. Lysine 650 contacts ATP.

The protein belongs to the class-I aminoacyl-tRNA synthetase family. IleS type 2 subfamily. As to quaternary structure, monomer. It depends on Zn(2+) as a cofactor.

Its subcellular location is the cytoplasm. It carries out the reaction tRNA(Ile) + L-isoleucine + ATP = L-isoleucyl-tRNA(Ile) + AMP + diphosphate. In terms of biological role, catalyzes the attachment of isoleucine to tRNA(Ile). As IleRS can inadvertently accommodate and process structurally similar amino acids such as valine, to avoid such errors it has two additional distinct tRNA(Ile)-dependent editing activities. One activity is designated as 'pretransfer' editing and involves the hydrolysis of activated Val-AMP. The other activity is designated 'posttransfer' editing and involves deacylation of mischarged Val-tRNA(Ile). The polypeptide is Isoleucine--tRNA ligase (Ehrlichia canis (strain Jake)).